The following is a 759-amino-acid chain: Phosphoribosylformylglycinamidine synthase subunit PurL (759 aa).

Residue histidine 46 is part of the active site. ATP-binding residues include tyrosine 49 and lysine 88. Position 90 (glutamate 90) interacts with Mg(2+). Residues 91-94 (SHNH) and arginine 113 each bind substrate. Histidine 92 serves as the catalytic Proton acceptor. Aspartate 114 provides a ligand contact to Mg(2+). Substrate is bound at residue glutamine 237. A Mg(2+)-binding site is contributed by aspartate 265. Position 309 to 311 (309 to 311 (ESQ)) interacts with substrate. Aspartate 498 and glycine 535 together coordinate ATP. Asparagine 536 contacts Mg(2+). Serine 538 serves as a coordination point for substrate.

Belongs to the FGAMS family. Monomer. Part of the FGAM synthase complex composed of 1 PurL, 1 PurQ and 2 PurS subunits.

Its subcellular location is the cytoplasm. The catalysed reaction is N(2)-formyl-N(1)-(5-phospho-beta-D-ribosyl)glycinamide + L-glutamine + ATP + H2O = 2-formamido-N(1)-(5-O-phospho-beta-D-ribosyl)acetamidine + L-glutamate + ADP + phosphate + H(+). Its pathway is purine metabolism; IMP biosynthesis via de novo pathway; 5-amino-1-(5-phospho-D-ribosyl)imidazole from N(2)-formyl-N(1)-(5-phospho-D-ribosyl)glycinamide: step 1/2. Its function is as follows. Part of the phosphoribosylformylglycinamidine synthase complex involved in the purines biosynthetic pathway. Catalyzes the ATP-dependent conversion of formylglycinamide ribonucleotide (FGAR) and glutamine to yield formylglycinamidine ribonucleotide (FGAM) and glutamate. The FGAM synthase complex is composed of three subunits. PurQ produces an ammonia molecule by converting glutamine to glutamate. PurL transfers the ammonia molecule to FGAR to form FGAM in an ATP-dependent manner. PurS interacts with PurQ and PurL and is thought to assist in the transfer of the ammonia molecule from PurQ to PurL. The protein is Phosphoribosylformylglycinamidine synthase subunit PurL of Anaeromyxobacter sp. (strain K).